Here is a 240-residue protein sequence, read N- to C-terminus: Probable transcriptional regulatory protein HPP12_0160 (240 aa).

The protein belongs to the TACO1 family.

Its subcellular location is the cytoplasm. This Helicobacter pylori (strain P12) protein is Probable transcriptional regulatory protein HPP12_0160.